The chain runs to 681 residues: DNA ligase (681 aa).

NAD(+)-binding positions include 33–37 (DGQFD), 83–84 (SL), and Glu-113. Residue Lys-115 is the N6-AMP-lysine intermediate of the active site. Residues Arg-136, Glu-176, Lys-292, and Lys-316 each coordinate NAD(+). Positions 410, 413, 429, and 435 each coordinate Zn(2+). The BRCT domain occupies 599–681 (SIPRNLEGLS…RALLADGPPA (83 aa)).

It belongs to the NAD-dependent DNA ligase family. LigA subfamily. Mg(2+) is required as a cofactor. It depends on Mn(2+) as a cofactor.

It carries out the reaction NAD(+) + (deoxyribonucleotide)n-3'-hydroxyl + 5'-phospho-(deoxyribonucleotide)m = (deoxyribonucleotide)n+m + AMP + beta-nicotinamide D-nucleotide.. Functionally, DNA ligase that catalyzes the formation of phosphodiester linkages between 5'-phosphoryl and 3'-hydroxyl groups in double-stranded DNA using NAD as a coenzyme and as the energy source for the reaction. It is essential for DNA replication and repair of damaged DNA. The sequence is that of DNA ligase from Mycobacteroides abscessus (strain ATCC 19977 / DSM 44196 / CCUG 20993 / CIP 104536 / JCM 13569 / NCTC 13031 / TMC 1543 / L948) (Mycobacterium abscessus).